The primary structure comprises 161 residues: Nucleotide-binding protein Shewmr4_3156 (161 aa).

This sequence belongs to the YajQ family.

Nucleotide-binding protein. This chain is Nucleotide-binding protein Shewmr4_3156, found in Shewanella sp. (strain MR-4).